The sequence spans 258 residues: Trans-aconitate 2-methyltransferase (258 aa).

Belongs to the methyltransferase superfamily. Tam family.

It localises to the cytoplasm. The catalysed reaction is trans-aconitate + S-adenosyl-L-methionine = (E)-3-(methoxycarbonyl)pent-2-enedioate + S-adenosyl-L-homocysteine. Functionally, catalyzes the S-adenosylmethionine monomethyl esterification of trans-aconitate. This is Trans-aconitate 2-methyltransferase from Methylobacterium nodulans (strain LMG 21967 / CNCM I-2342 / ORS 2060).